Consider the following 205-residue polypeptide: Thymidylate kinase (205 aa).

Residue 7-14 (GIDGSGKT) coordinates ATP.

Belongs to the thymidylate kinase family.

The catalysed reaction is dTMP + ATP = dTDP + ADP. Functionally, phosphorylation of dTMP to form dTDP in both de novo and salvage pathways of dTTP synthesis. The protein is Thymidylate kinase of Wolbachia pipientis subsp. Culex pipiens (strain wPip).